A 416-amino-acid polypeptide reads, in one-letter code: Thioredoxin domain-containing protein 5 homolog (416 aa).

A signal peptide spans 1-25 (MLTRSILSVAVCGLLLSPLLPITRA). 3 consecutive Thioredoxin domains span residues 26 to 145 (SQEE…KELS), 150 to 272 (ADLG…KMVG), and 293 to 412 (AGEE…KFLG). 3 disulfides stabilise this stretch: Cys65–Cys68, Cys194–Cys197, and Cys331–Cys334. Residues 413 to 416 (HDEL) carry the Prevents secretion from ER motif.

Belongs to the protein disulfide isomerase family.

The protein localises to the endoplasmic reticulum. It is found in the cell surface. Its function is as follows. Possesses thioredoxin activity. Acts as a ligand for Drpr and is required for the phagocytosis of apoptotic cells. Binds to the extracellular region of Drpr and augments Drpr tyrosine phosphorylation. This Drosophila melanogaster (Fruit fly) protein is Thioredoxin domain-containing protein 5 homolog.